The following is a 546-amino-acid chain: SusD-like protein BACOVA_02651 (546 aa).

The first 21 residues, 1–21, serve as a signal peptide directing secretion; that stretch reads MRIFMKSKLLVIATTALLFAA. The N-palmitoyl cysteine moiety is linked to residue Cys-22. Cys-22 carries S-diacylglycerol cysteine lipidation.

It belongs to the SusD family.

The protein localises to the cell outer membrane. The protein operates within glucan metabolism; xyloglucan degradation. Its function is as follows. Polysaccharide-binding protein present at the surface of the cell. Probably mediates xyloglucan-binding before xyloglucan transport in the periplasm for degradation. This Bacteroides ovatus (strain ATCC 8483 / DSM 1896 / JCM 5824 / BCRC 10623 / CCUG 4943 / NCTC 11153) protein is SusD-like protein BACOVA_02651.